The chain runs to 432 residues: SVP1-like protein 2 (432 aa).

WD repeat units follow at residues 223 to 263 (AHKS…LLYE) and 268 to 307 (LDRAIVTSMKFSHDDSKLAVLSDKNTLHVYNVSPLNTSSG).

This sequence belongs to the WD repeat PROPPIN family.

The protein localises to the vacuole membrane. The protein resides in the cytoplasmic vesicle membrane. Functionally, involved in mitochondrial or peroxisomal functions and amino acid signaling pathways. This chain is SVP1-like protein 2 (HSV2), found in Debaryomyces hansenii (strain ATCC 36239 / CBS 767 / BCRC 21394 / JCM 1990 / NBRC 0083 / IGC 2968) (Yeast).